The sequence spans 540 residues: Chaperonin GroEL (540 aa).

ATP-binding positions include 30–33 (TLGP), 87–91 (DGTTT), Gly414, 479–481 (NAL), and Asp495.

This sequence belongs to the chaperonin (HSP60) family. In terms of assembly, forms a cylinder of 14 subunits composed of two heptameric rings stacked back-to-back. Interacts with the co-chaperonin GroES.

Its subcellular location is the cytoplasm. It catalyses the reaction ATP + H2O + a folded polypeptide = ADP + phosphate + an unfolded polypeptide.. In terms of biological role, together with its co-chaperonin GroES, plays an essential role in assisting protein folding. The GroEL-GroES system forms a nano-cage that allows encapsulation of the non-native substrate proteins and provides a physical environment optimized to promote and accelerate protein folding. This Carboxydothermus hydrogenoformans (strain ATCC BAA-161 / DSM 6008 / Z-2901) protein is Chaperonin GroEL.